Here is a 344-residue protein sequence, read N- to C-terminus: N-acetyl-gamma-glutamyl-phosphate reductase (344 aa).

The active site involves C150.

This sequence belongs to the NAGSA dehydrogenase family. Type 1 subfamily.

It localises to the cytoplasm. It catalyses the reaction N-acetyl-L-glutamate 5-semialdehyde + phosphate + NADP(+) = N-acetyl-L-glutamyl 5-phosphate + NADPH + H(+). It participates in amino-acid biosynthesis; L-arginine biosynthesis; N(2)-acetyl-L-ornithine from L-glutamate: step 3/4. Its function is as follows. Catalyzes the NADPH-dependent reduction of N-acetyl-5-glutamyl phosphate to yield N-acetyl-L-glutamate 5-semialdehyde. This is N-acetyl-gamma-glutamyl-phosphate reductase from Pseudomonas fluorescens (strain SBW25).